Reading from the N-terminus, the 317-residue chain is tRNA dimethylallyltransferase (317 aa).

ATP is bound at residue 14-21; the sequence is GPTASGKS. A substrate-binding site is contributed by 16-21; sequence TASGKS. Interaction with substrate tRNA stretches follow at residues 39–42 and 163–167; these read DSVL and QRIQR.

Belongs to the IPP transferase family. Monomer. It depends on Mg(2+) as a cofactor.

The enzyme catalyses adenosine(37) in tRNA + dimethylallyl diphosphate = N(6)-dimethylallyladenosine(37) in tRNA + diphosphate. In terms of biological role, catalyzes the transfer of a dimethylallyl group onto the adenine at position 37 in tRNAs that read codons beginning with uridine, leading to the formation of N6-(dimethylallyl)adenosine (i(6)A). This chain is tRNA dimethylallyltransferase, found in Xylella fastidiosa (strain M12).